A 225-amino-acid polypeptide reads, in one-letter code: Peptidyl-prolyl cis-trans isomerase D (225 aa).

An N-terminal signal peptide occupies residues 1 to 22 (MKLQFFSFITLFACLFTTAIFA). A PPIase cyclophilin-type domain is found at 37–195 (YFDINHGDKQ…KEVIIVESGE (159 aa)). Residue asparagine 139 is glycosylated (N-linked (GlcNAc...) asparagine). A Prevents secretion from ER motif is present at residues 222–225 (HDEL).

This sequence belongs to the cyclophilin-type PPIase family. PPIase B subfamily.

The protein resides in the endoplasmic reticulum lumen. It catalyses the reaction [protein]-peptidylproline (omega=180) = [protein]-peptidylproline (omega=0). Its function is as follows. PPIases accelerate the folding of proteins. It catalyzes the cis-trans isomerization of proline imidic peptide bonds in oligopeptides. In Saccharomyces cerevisiae (strain ATCC 204508 / S288c) (Baker's yeast), this protein is Peptidyl-prolyl cis-trans isomerase D.